Reading from the N-terminus, the 468-residue chain is MTSQLHKKGEAWSARFSEPMSELVKRYTSSVFFDKRLALVDIEGSLAHASMLAAQKIIAADDLAAIQRGMAQIKGEIERGEFEWQLDLEDVHLNIEARLTALIGDAGKRLHTGRSRNDQVATDIRLWLRGEIDRIGGLLTELRTALLDMAEKNASTIMPGFTHLQVAQPVTFGHHLLAYVEMFSRDAERMIDCRKRVNRLPLGAAALAGTSYPIDRHAVAKTLGFDGICANSLDAVSDRDFAIEFTAASALVMTHVSRFSEELVLWMSPRVGFIDLADRFCTGSSIMPQKKNPDVPELARGKTGRVNGHLIALLTLMKGQPLAYNKDNQEDKEPLFDTVDTVADTLRIFAEMVAGISVKPQAMRDAALQGFSTATDLADYLVKRGLPFRDAHEAVALAVRVCADRGCDLADLTLEEMRKELPNVAHLIGEDVFSYLTLEGSVASRNHPGGTAPEQVLAAVKAARAALK.

The protein belongs to the lyase 1 family. Argininosuccinate lyase subfamily.

Its subcellular location is the cytoplasm. It catalyses the reaction 2-(N(omega)-L-arginino)succinate = fumarate + L-arginine. It functions in the pathway amino-acid biosynthesis; L-arginine biosynthesis; L-arginine from L-ornithine and carbamoyl phosphate: step 3/3. The protein is Argininosuccinate lyase of Paraburkholderia phytofirmans (strain DSM 17436 / LMG 22146 / PsJN) (Burkholderia phytofirmans).